The following is a 263-amino-acid chain: Transcription factor 19-like protein (263 aa).

In terms of domain architecture, FHA spans 31 to 88; it reads YGLGCRADLCDVALRPQQEPGLISGVHAELHAELQGDDWRVSLEDHSSQGTLVNNVRL. Ser78 carries the post-translational modification Phosphoserine. 2 disordered regions span residues 140–164 and 189–225; these read SKGE…PLST and LTFS…RKSA.

The protein resides in the nucleus. In terms of biological role, potential transcription factor that may play a role in the regulation of genes involved in cell cycle G1/S transition. May bind to regulatory elements of genes, including the promoter of the transcription factor FOXO1. This is Transcription factor 19-like protein (Tcf19) from Mus musculus (Mouse).